The chain runs to 242 residues: Universal stress protein PHOS32 (242 aa).

Residues 1 to 43 constitute a chloroplast transit peptide; the sequence is MNPADSDHPQLPNIKIHHPPSPRHSHHHHSSSTPSSAATPTPT. A disordered region spans residues 1-45; the sequence is MNPADSDHPQLPNIKIHHPPSPRHSHHHHSSSTPSSAATPTPTAG. Positions 15-30 are enriched in basic residues; it reads KIHHPPSPRHSHHHHS. P19 serves as a coordination point for ATP. S21 is subject to Phosphoserine; by MAPK3 and MAPK6. A compositionally biased stretch (low complexity) spans 31 to 44; sequence SSTPSSAATPTPTA. Residues V83, 168–178, and 186–188 each bind ATP; these read GSRGFGAEKKR and SVS. Position 219 is a phosphoserine (S219).

This sequence belongs to the universal stress protein A family. In terms of processing, phosphorylated by MAPK3 and MAPK6 after pathogenic elicitation (e.g. bacterial flg22, Phytophthora infestans zoospores and xylanase).

It localises to the plastid. The protein localises to the chloroplast. The protein is Universal stress protein PHOS32 of Arabidopsis thaliana (Mouse-ear cress).